Reading from the N-terminus, the 360-residue chain is 3-dehydroquinate synthase (360 aa).

NAD(+)-binding positions include 72–77 (DGEEFK), 106–110 (GVVGD), 130–131 (TT), Lys-143, Lys-152, and 170–173 (TLTT). Positions 185, 248, and 265 each coordinate Zn(2+).

It belongs to the sugar phosphate cyclases superfamily. Dehydroquinate synthase family. Requires Co(2+) as cofactor. Zn(2+) is required as a cofactor. The cofactor is NAD(+).

Its subcellular location is the cytoplasm. It carries out the reaction 7-phospho-2-dehydro-3-deoxy-D-arabino-heptonate = 3-dehydroquinate + phosphate. Its pathway is metabolic intermediate biosynthesis; chorismate biosynthesis; chorismate from D-erythrose 4-phosphate and phosphoenolpyruvate: step 2/7. Its function is as follows. Catalyzes the conversion of 3-deoxy-D-arabino-heptulosonate 7-phosphate (DAHP) to dehydroquinate (DHQ). This Geobacter metallireducens (strain ATCC 53774 / DSM 7210 / GS-15) protein is 3-dehydroquinate synthase.